A 350-amino-acid chain; its full sequence is Ferredoxin--NADP reductase (350 aa).

FAD-binding residues include threonine 25, glutamate 44, glutamine 52, tyrosine 57, valine 97, phenylalanine 132, aspartate 298, and serine 339.

This sequence belongs to the ferredoxin--NADP reductase type 2 family. As to quaternary structure, homodimer. It depends on FAD as a cofactor.

It catalyses the reaction 2 reduced [2Fe-2S]-[ferredoxin] + NADP(+) + H(+) = 2 oxidized [2Fe-2S]-[ferredoxin] + NADPH. The chain is Ferredoxin--NADP reductase from Chlorobium limicola (strain DSM 245 / NBRC 103803 / 6330).